We begin with the raw amino-acid sequence, 446 residues long: 4-aminobutyrate aminotransferase (446 aa).

Lysine 291 carries the N6-(pyridoxal phosphate)lysine modification.

It belongs to the class-III pyridoxal-phosphate-dependent aminotransferase family. It depends on pyridoxal 5'-phosphate as a cofactor.

The catalysed reaction is 4-aminobutanoate + 2-oxoglutarate = succinate semialdehyde + L-glutamate. It catalyses the reaction (S)-3-amino-2-methylpropanoate + 2-oxoglutarate = 2-methyl-3-oxopropanoate + L-glutamate. It functions in the pathway amino-acid degradation; 4-aminobutanoate degradation. This is 4-aminobutyrate aminotransferase (gabT) from Mycobacterium leprae (strain TN).